The sequence spans 345 residues: Phosphoribosylformylglycinamidine cyclo-ligase (345 aa).

Belongs to the AIR synthase family.

The protein localises to the cytoplasm. The catalysed reaction is 2-formamido-N(1)-(5-O-phospho-beta-D-ribosyl)acetamidine + ATP = 5-amino-1-(5-phospho-beta-D-ribosyl)imidazole + ADP + phosphate + H(+). It functions in the pathway purine metabolism; IMP biosynthesis via de novo pathway; 5-amino-1-(5-phospho-D-ribosyl)imidazole from N(2)-formyl-N(1)-(5-phospho-D-ribosyl)glycinamide: step 2/2. The protein is Phosphoribosylformylglycinamidine cyclo-ligase of Shewanella sp. (strain MR-7).